Here is a 127-residue protein sequence, read N- to C-terminus: uncharacterized protein (127 aa).

The next 2 membrane-spanning stretches (helical) occupy residues 48 to 68 (LYSL…PLSI) and 83 to 103 (VFLF…CLID).

The protein localises to the membrane. This is an uncharacterized protein from Saccharomyces cerevisiae (strain ATCC 204508 / S288c) (Baker's yeast).